Here is a 306-residue protein sequence, read N- to C-terminus: Acetyl-coenzyme A carboxylase carboxyl transferase subunit beta (306 aa).

The CoA carboxyltransferase N-terminal domain maps to 27–296 (LWHKCPSCEA…PEFVAAPVEP (270 aa)). Positions 31, 34, 50, and 53 each coordinate Zn(2+). The C4-type zinc finger occupies 31 to 53 (CPSCEAVLYRPELEKTLDVCPKC).

Belongs to the AccD/PCCB family. In terms of assembly, acetyl-CoA carboxylase is a heterohexamer composed of biotin carboxyl carrier protein (AccB), biotin carboxylase (AccC) and two subunits each of ACCase subunit alpha (AccA) and ACCase subunit beta (AccD). Zn(2+) is required as a cofactor.

The protein resides in the cytoplasm. It catalyses the reaction N(6)-carboxybiotinyl-L-lysyl-[protein] + acetyl-CoA = N(6)-biotinyl-L-lysyl-[protein] + malonyl-CoA. It functions in the pathway lipid metabolism; malonyl-CoA biosynthesis; malonyl-CoA from acetyl-CoA: step 1/1. Component of the acetyl coenzyme A carboxylase (ACC) complex. Biotin carboxylase (BC) catalyzes the carboxylation of biotin on its carrier protein (BCCP) and then the CO(2) group is transferred by the transcarboxylase to acetyl-CoA to form malonyl-CoA. The protein is Acetyl-coenzyme A carboxylase carboxyl transferase subunit beta of Pseudomonas fluorescens (strain ATCC BAA-477 / NRRL B-23932 / Pf-5).